Consider the following 243-residue polypeptide: Transmembrane protein 174 (243 aa).

2 helical membrane passes run 40–60 (LLFS…MGWI) and 73–93 (LLGP…VCKF).

As to quaternary structure, interacts with SLC34A1; regulates SLC34A1 internalization by PTH and FGF23.

It localises to the endoplasmic reticulum membrane. It is found in the apical cell membrane. Its function is as follows. Regulator of plasma phosphate homeostasis. Decreases serum inorganic phosphate (Pi) uptake by regulating the sodium-phosphate cotransporter SLC34A1 trafficking by PTH and FGF23 in the kidney. The sequence is that of Transmembrane protein 174 (TMEM174) from Pongo abelii (Sumatran orangutan).